The chain runs to 591 residues: V-type ATP synthase alpha chain (591 aa).

233–240 serves as a coordination point for ATP; sequence GPFGAGKT.

Belongs to the ATPase alpha/beta chains family.

It carries out the reaction ATP + H2O + 4 H(+)(in) = ADP + phosphate + 5 H(+)(out). In terms of biological role, produces ATP from ADP in the presence of a proton gradient across the membrane. The V-type alpha chain is a catalytic subunit. The chain is V-type ATP synthase alpha chain from Streptococcus pyogenes serotype M5 (strain Manfredo).